A 477-amino-acid polypeptide reads, in one-letter code: Bifunctional protein HldE (477 aa).

The interval 1–318 is ribokinase; it reads MKVNLPAFER…ENAVRGRADT (318 aa). 195 to 198 lines the ATP pocket; that stretch reads NLSE. The active site involves Asp-264. Residues 344-477 are cytidylyltransferase; it reads MTNGVFDILH…IKKIQTESEK (134 aa).

It in the N-terminal section; belongs to the carbohydrate kinase PfkB family. This sequence in the C-terminal section; belongs to the cytidylyltransferase family. As to quaternary structure, homodimer.

The enzyme catalyses D-glycero-beta-D-manno-heptose 7-phosphate + ATP = D-glycero-beta-D-manno-heptose 1,7-bisphosphate + ADP + H(+). It catalyses the reaction D-glycero-beta-D-manno-heptose 1-phosphate + ATP + H(+) = ADP-D-glycero-beta-D-manno-heptose + diphosphate. It participates in nucleotide-sugar biosynthesis; ADP-L-glycero-beta-D-manno-heptose biosynthesis; ADP-L-glycero-beta-D-manno-heptose from D-glycero-beta-D-manno-heptose 7-phosphate: step 1/4. Its pathway is nucleotide-sugar biosynthesis; ADP-L-glycero-beta-D-manno-heptose biosynthesis; ADP-L-glycero-beta-D-manno-heptose from D-glycero-beta-D-manno-heptose 7-phosphate: step 3/4. Catalyzes the phosphorylation of D-glycero-D-manno-heptose 7-phosphate at the C-1 position to selectively form D-glycero-beta-D-manno-heptose-1,7-bisphosphate. Its function is as follows. Catalyzes the ADP transfer from ATP to D-glycero-beta-D-manno-heptose 1-phosphate, yielding ADP-D-glycero-beta-D-manno-heptose. This is Bifunctional protein HldE from Salmonella paratyphi A (strain ATCC 9150 / SARB42).